We begin with the raw amino-acid sequence, 232 residues long: Putative uridine kinase DAS2 (232 aa).

An ATP-binding site is contributed by Gly-17 to Gly-24.

Belongs to the uridine kinase family.

The protein localises to the cytoplasm. It localises to the nucleus. The catalysed reaction is uridine + ATP = UMP + ADP + H(+). It carries out the reaction cytidine + ATP = CMP + ADP + H(+). It participates in pyrimidine metabolism; CTP biosynthesis via salvage pathway; CTP from cytidine: step 1/3. It functions in the pathway pyrimidine metabolism; UMP biosynthesis via salvage pathway; UMP from uridine: step 1/1. Functionally, putative uridine kinase identified in a screen for mutants with increased levels of rDNA transcription. The chain is Putative uridine kinase DAS2 (DAS2) from Saccharomyces cerevisiae (strain ATCC 204508 / S288c) (Baker's yeast).